The chain runs to 995 residues: Meckelin (995 aa).

An N-terminal signal peptide occupies residues 1-36; the sequence is MATRGGAGVAMAVWSLLSARAVTAFLLLFLPRFLQA. Residues 37–280 form a cysteine-rich region; sequence QTFSFPFQQP…FQFIFENTAG (244 aa). Residues 37–519 are Extracellular-facing; sequence QTFSFPFQQP…SVTYEMDHGE (483 aa). Disulfide bonds link cysteine 49/cysteine 62, cysteine 65/cysteine 78, cysteine 80/cysteine 97, cysteine 100/cysteine 114, cysteine 117/cysteine 127, cysteine 129/cysteine 150, cysteine 153/cysteine 170, cysteine 173/cysteine 184, cysteine 186/cysteine 197, cysteine 237/cysteine 246, and cysteine 253/cysteine 268. Asparagine 141 carries an N-linked (GlcNAc...) asparagine glycan. N-linked (GlcNAc...) asparagine glycosylation occurs at asparagine 179. Residue asparagine 242 is glycosylated (N-linked (GlcNAc...) asparagine). Asparagine 318 carries an N-linked (GlcNAc...) asparagine glycan. A disulfide bridge links cysteine 357 with cysteine 378. Residues 520 to 548 traverse the membrane as a helical segment; sequence AHVQTDIALGVLGGLAVLASLLKTAGWKR. The Cytoplasmic portion of the chain corresponds to 549–558; sequence RIGSPMIDLQ. Residues 559–590 traverse the membrane as a helical segment; it reads TVVKFLVYYAGDLANVFFIITVGTGLYWLIFF. Topologically, residues 591 to 603 are extracellular; it reads KAQKSVSVLLPMP. The helical transmembrane segment at 604–631 threads the bilayer; that stretch reads IQEERFVTYVGCAFALKALQFLHKLISQ. Residues 632-670 are Cytoplasmic-facing; it reads ITIDVFFIDWERPKGKVLKAVEGEGGVRSATVPVSIWRT. An intramembrane region (helical) is located at residues 671-679; the sequence is YFVANEWNE. Residues 671–701 traverse the membrane as a discontinuously helical segment; sequence YFVANEWNEIQTVRKINSLFQVLTVLFFLEV. Residues 680–688 lie within the membrane without spanning it; the sequence is IQTVRKINS. The helical intramembrane region spans 689–701; sequence LFQVLTVLFFLEV. At 702 to 731 the chain is on the extracellular side; the sequence is VGFKNLALMDSSSSLSRNPPSYIAPYSCIL. An intramembrane region (helical) is located at residues 732–757; it reads RYAVSAALWLAIGIIQVVFFAVFYER. A discontinuously helical transmembrane segment spans residues 732–771; sequence RYAVSAALWLAIGIIQVVFFAVFYERFIEDKIRQFVDLCS. The stretch at 758 to 762 is an intramembrane region; that stretch reads FIEDK. The segment at residues 763-771 is an intramembrane region (helical); that stretch reads IRQFVDLCS. Over 772–926 the chain is Cytoplasmic; sequence MSNISVFLLS…SIFYNDEGYS (155 aa). Residues 828 to 917 are a coiled coil; the sequence is GQTFEIAISN…MEFMEPMEKS (90 aa). Positions 927–929 form an intramembrane region, helical; that stretch reads FSS. Residues 927–952 traverse the membrane as a discontinuously helical segment; sequence FSSVLYYGNEATLLIFDLLFFCVVDL. An intramembrane segment occupies 930 to 936; that stretch reads VLYYGNE. The helical intramembrane region spans 937-952; the sequence is ATLLIFDLLFFCVVDL. Over 953–957 the chain is Extracellular; it reads ACQNF. Residues 958–985 traverse the membrane as a helical segment; sequence ILASFLTYLQQEIFRYIRNTVGQKNLAS. The Cytoplasmic segment spans residues 986–995; it reads KTLVDQRFLI.

As to quaternary structure, homodimer. Part of the tectonic-like complex (also named B9 complex). Interacts with DNAJB9, DNAJC10 and mutated SFTPC. Interacts with SYNE2 during the early establishment of cell polarity. Interacts (via C-terminus) with FLNA. Interacts with TMEM218. Interacts with WNT5A. Interacts with ROR2. Widely expressed in adult and fetal tissues. Expressed at higher level in spinal cord.

The protein localises to the cell membrane. Its subcellular location is the endoplasmic reticulum membrane. It localises to the cell projection. It is found in the cilium. The protein resides in the cytoplasm. The protein localises to the cytoskeleton. Its subcellular location is the cilium basal body. Its function is as follows. Required for ciliary structure and function. Part of the tectonic-like complex which is required for tissue-specific ciliogenesis and may regulate ciliary membrane composition. Involved in centrosome migration to the apical cell surface during early ciliogenesis. Involved in the regulation of cilia length and appropriate number through the control of centrosome duplication. Is a key regulator of stereociliary bundle orientation. Required for epithelial cell branching morphology. Essential for endoplasmic reticulum-associated degradation (ERAD) of surfactant protein C (SFTPC). Involved in the negative regulation of canonical Wnt signaling, and activation of the non-canonical cascade stimulated by WNT5A. In non-canonical Wnt signaling, it may act as ROR2 coreceptor. The chain is Meckelin (TMEM67) from Homo sapiens (Human).